Reading from the N-terminus, the 405-residue chain is MEQIKLDSIADAIEAIRKGEVIIVVDDEDRENEGDFICAAECVTPEIINFMSKEGRGLICAPISEARCTELKLDLMVGSNTATHETPFTVSVDLLGNGCTTGISASDRSKTIRALVDPDTKPEDLGRPGHIFPLKAKDEGVLRRVGHTEAAVDLARLAGFKPAGVLIEIMSEDGSMARLPELKQIATKFNLKLISIKDLIEYRLTHESLVKREIGVDMPTNLGDFDLIAFRQISTGEVHLALIKGTWEKDEPVMVRVHSSCVTGDIFGSCRCDCGPQLHKAMEMIQQEGKGVILYMNQEGRGIGLLNKLKAYKLQEQGRDTVEANLELGFKMDQRDYGTGAQILRDLNISKLRLITNNPVKRAALAGYGLEITEAVPIEIPSNPHNLEYLKTKRDKMGHTILKKD.

Residues 1–205 (MEQIKLDSIA…IKDLIEYRLT (205 aa)) form a DHBP synthase region. D-ribulose 5-phosphate contacts are provided by residues 30–31 (RE), D35, 144–148 (RVGHT), and E168. E31 serves as a coordination point for Mg(2+). Residue H147 coordinates Mg(2+). The GTP cyclohydrolase II stretch occupies residues 206-405 (HESLVKREIG…KMGHTILKKD (200 aa)). 256 to 260 (RVHSS) is a binding site for GTP. The Zn(2+) site is built by C261, C272, and C274. GTP-binding positions include Q277, 299 to 301 (EGR), and T321. Residue D333 is the Proton acceptor; for GTP cyclohydrolase activity of the active site. R335 serves as the catalytic Nucleophile; for GTP cyclohydrolase activity. The GTP site is built by T356 and K361.

In the N-terminal section; belongs to the DHBP synthase family. The protein in the C-terminal section; belongs to the GTP cyclohydrolase II family. It depends on Mg(2+) as a cofactor. Mn(2+) serves as cofactor. Requires Zn(2+) as cofactor.

It carries out the reaction D-ribulose 5-phosphate = (2S)-2-hydroxy-3-oxobutyl phosphate + formate + H(+). The catalysed reaction is GTP + 4 H2O = 2,5-diamino-6-hydroxy-4-(5-phosphoribosylamino)-pyrimidine + formate + 2 phosphate + 3 H(+). It functions in the pathway cofactor biosynthesis; riboflavin biosynthesis; 2-hydroxy-3-oxobutyl phosphate from D-ribulose 5-phosphate: step 1/1. The protein operates within cofactor biosynthesis; riboflavin biosynthesis; 5-amino-6-(D-ribitylamino)uracil from GTP: step 1/4. Functionally, catalyzes the conversion of D-ribulose 5-phosphate to formate and 3,4-dihydroxy-2-butanone 4-phosphate. Catalyzes the conversion of GTP to 2,5-diamino-6-ribosylamino-4(3H)-pyrimidinone 5'-phosphate (DARP), formate and pyrophosphate. In Cytophaga hutchinsonii (strain ATCC 33406 / DSM 1761 / CIP 103989 / NBRC 15051 / NCIMB 9469 / D465), this protein is Riboflavin biosynthesis protein RibBA.